Reading from the N-terminus, the 2298-residue chain is Protein Ycf2 (2298 aa).

ATP is bound at residue 1638 to 1645 (GSIGTGRS).

Belongs to the Ycf2 family.

It is found in the plastid. The protein resides in the chloroplast stroma. In terms of biological role, probable ATPase of unknown function. Its presence in a non-photosynthetic plant (Epifagus virginiana) and experiments in tobacco indicate that it has an essential function which is probably not related to photosynthesis. The sequence is that of Protein Ycf2 from Gossypium barbadense (Sea Island cotton).